The chain runs to 842 residues: Glucans biosynthesis glucosyltransferase H (842 aa).

A run of 7 helical transmembrane segments spans residues 140-160 (ILLLLTLSQTVVATWYMKTIL), 194-214 (ILILFAVLFCWVSAGFWTALM), 513-533 (VFLTGVMSYLSAPLWFMFLAL), 568-588 (IALFASTMVLLFLPKLLSIIL), 615-635 (VLLAPVRMLFHTVFVVSAFLG), 656-676 (FMRHGSQLLLGLVWAVGMAWL), and 680-700 (FLFWLAPIVVSLILSPFVSAI).

This sequence belongs to the glycosyltransferase 2 family. OpgH subfamily.

The protein resides in the cell inner membrane. Its pathway is glycan metabolism; osmoregulated periplasmic glucan (OPG) biosynthesis. Involved in the biosynthesis of osmoregulated periplasmic glucans (OPGs). The sequence is that of Glucans biosynthesis glucosyltransferase H from Klebsiella pneumoniae subsp. pneumoniae (strain ATCC 700721 / MGH 78578).